We begin with the raw amino-acid sequence, 257 residues long: Thiazole synthase (257 aa).

Residue K96 is the Schiff-base intermediate with DXP of the active site. Residues G157, 184-185, and 206-207 each bind 1-deoxy-D-xylulose 5-phosphate; these read AG and NT.

It belongs to the ThiG family. In terms of assembly, homotetramer. Forms heterodimers with either ThiH or ThiS.

The protein resides in the cytoplasm. It catalyses the reaction [ThiS sulfur-carrier protein]-C-terminal-Gly-aminoethanethioate + 2-iminoacetate + 1-deoxy-D-xylulose 5-phosphate = [ThiS sulfur-carrier protein]-C-terminal Gly-Gly + 2-[(2R,5Z)-2-carboxy-4-methylthiazol-5(2H)-ylidene]ethyl phosphate + 2 H2O + H(+). The protein operates within cofactor biosynthesis; thiamine diphosphate biosynthesis. Catalyzes the rearrangement of 1-deoxy-D-xylulose 5-phosphate (DXP) to produce the thiazole phosphate moiety of thiamine. Sulfur is provided by the thiocarboxylate moiety of the carrier protein ThiS. In vitro, sulfur can be provided by H(2)S. The protein is Thiazole synthase of Agrobacterium fabrum (strain C58 / ATCC 33970) (Agrobacterium tumefaciens (strain C58)).